Consider the following 357-residue polypeptide: DNA integrity scanning protein DisA (357 aa).

The DAC domain occupies 8 to 146 (VKSIINILQL…GNLRYTLKDI (139 aa)). ATP is bound by residues Gly75, Leu93, and 106-110 (MRHRT).

It belongs to the DisA family. Homooctamer. Requires Mg(2+) as cofactor.

It catalyses the reaction 2 ATP = 3',3'-c-di-AMP + 2 diphosphate. In terms of biological role, participates in a DNA-damage check-point that is active prior to asymmetric division when DNA is damaged. DisA forms globular foci that rapidly scan along the chromosomes during sporulation, searching for lesions. When a lesion is present, DisA pauses at the lesion site. This triggers a cellular response that culminates in a temporary block in sporulation initiation. Its function is as follows. Also has diadenylate cyclase activity, catalyzing the condensation of 2 ATP molecules into cyclic di-AMP (c-di-AMP). c-di-AMP acts as a signaling molecule that couples DNA integrity with progression of sporulation. The rise in c-di-AMP level generated by DisA while scanning the chromosome, operates as a positive signal that advances sporulation; upon encountering a lesion, the DisA focus arrests at the damaged site and halts c-di-AMP synthesis. The chain is DNA integrity scanning protein DisA from Bacillus cereus (strain B4264).